A 1755-amino-acid polypeptide reads, in one-letter code: Transposon Ty1-ER1 Gag-Pol polyprotein (1755 aa).

3 stretches are compositionally biased toward polar residues: residues methionine 1–serine 23, threonine 48–serine 60, and glutamine 127–phenylalanine 152. 3 disordered regions span residues methionine 1–glutamine 93, proline 126–methionine 174, and glycine 352–threonine 421. Residues threonine 153–threonine 165 show a composition bias toward low complexity. An RNA-binding region spans residues asparagine 299–histidine 401. Low complexity predominate over residues asparagine 402–serine 418. At serine 416 the chain carries Phosphoserine. The active-site For protease activity; shared with dimeric partner is aspartate 461. Positions asparagine 583 to cysteine 640 are integrase-type zinc finger-like. One can recognise an Integrase catalytic domain in the interval asparagine 660–proline 835. Residues aspartate 671 and aspartate 736 each coordinate Mg(2+). 3 disordered regions span residues serine 956–lysine 1087, arginine 1092–proline 1111, and aspartate 1130–alanine 1171. Residues serine 960 to threonine 969 show a composition bias toward low complexity. Over residues serine 1005–threonine 1015 the composition is skewed to polar residues. Basic and acidic residues predominate over residues glutamate 1038 to serine 1053. Composition is skewed to polar residues over residues tyrosine 1054–aspartate 1082 and proline 1101–proline 1111. Residues lysine 1178 to arginine 1212 carry the Bipartite nuclear localization signal motif. In terms of domain architecture, Reverse transcriptase Ty1/copia-type spans asparagine 1338–glutamine 1476. Positions 1346, 1427, 1428, 1610, 1652, and 1685 each coordinate Mg(2+). Residues aspartate 1610–lysine 1752 form the RNase H Ty1/copia-type domain.

As to quaternary structure, the capsid protein forms a homotrimer, from which the VLPs are assembled. The protease is a homodimer, whose active site consists of two apposed aspartic acid residues. In terms of processing, initially, virus-like particles (VLPs) are composed of the structural unprocessed proteins Gag and Gag-Pol, and also contain the host initiator methionine tRNA (tRNA(i)-Met) which serves as a primer for minus-strand DNA synthesis, and a dimer of genomic Ty RNA. Processing of the polyproteins occurs within the particle and proceeds by an ordered pathway, called maturation. First, the protease (PR) is released by autocatalytic cleavage of the Gag-Pol polyprotein yielding capsid protein p45 and a Pol-p154 precursor protein. This cleavage is a prerequisite for subsequent processing of Pol-p154 at the remaining sites to release the mature structural and catalytic proteins. Maturation takes place prior to the RT reaction and is required to produce transposition-competent VLPs.

It localises to the cytoplasm. The protein resides in the nucleus. It catalyses the reaction DNA(n) + a 2'-deoxyribonucleoside 5'-triphosphate = DNA(n+1) + diphosphate. The catalysed reaction is Endonucleolytic cleavage to 5'-phosphomonoester.. Functionally, capsid protein (CA) is the structural component of the virus-like particle (VLP), forming the shell that encapsulates the retrotransposons dimeric RNA genome. The particles are assembled from trimer-clustered units and there are holes in the capsid shells that allow for the diffusion of macromolecules. CA also has nucleocapsid-like chaperone activity, promoting primer tRNA(i)-Met annealing to the multipartite primer-binding site (PBS), dimerization of Ty1 RNA and initiation of reverse transcription. Its function is as follows. The aspartyl protease (PR) mediates the proteolytic cleavages of the Gag and Gag-Pol polyproteins after assembly of the VLP. Reverse transcriptase/ribonuclease H (RT) is a multifunctional enzyme that catalyzes the conversion of the retro-elements RNA genome into dsDNA within the VLP. The enzyme displays a DNA polymerase activity that can copy either DNA or RNA templates, and a ribonuclease H (RNase H) activity that cleaves the RNA strand of RNA-DNA heteroduplexes during plus-strand synthesis and hydrolyzes RNA primers. The conversion leads to a linear dsDNA copy of the retrotransposon that includes long terminal repeats (LTRs) at both ends. In terms of biological role, integrase (IN) targets the VLP to the nucleus, where a subparticle preintegration complex (PIC) containing at least integrase and the newly synthesized dsDNA copy of the retrotransposon must transit the nuclear membrane. Once in the nucleus, integrase performs the integration of the dsDNA into the host genome. The sequence is that of Transposon Ty1-ER1 Gag-Pol polyprotein (TY1B-ER1) from Saccharomyces cerevisiae (strain ATCC 204508 / S288c) (Baker's yeast).